Here is a 380-residue protein sequence, read N- to C-terminus: Crotonobetainyl-CoA reductase (380 aa).

This sequence belongs to the acyl-CoA dehydrogenase family. Homotetramer. Requires FAD as cofactor.

Its subcellular location is the cytoplasm. It catalyses the reaction 4-(trimethylamino)butanoyl-CoA + oxidized [electron-transfer flavoprotein] + H(+) = crotonobetainyl-CoA + reduced [electron-transfer flavoprotein]. The protein operates within amine and polyamine metabolism; carnitine metabolism. In terms of biological role, catalyzes the reduction of crotonobetainyl-CoA to gamma-butyrobetainyl-CoA. The protein is Crotonobetainyl-CoA reductase of Salmonella agona (strain SL483).